Reading from the N-terminus, the 157-residue chain is Ribosome maturation factor RimP (157 aa).

It belongs to the RimP family.

The protein localises to the cytoplasm. Functionally, required for maturation of 30S ribosomal subunits. In Thermosynechococcus vestitus (strain NIES-2133 / IAM M-273 / BP-1), this protein is Ribosome maturation factor RimP.